We begin with the raw amino-acid sequence, 313 residues long: Intelectin-1b (313 aa).

The first 19 residues, 1 to 19, serve as a signal peptide directing secretion; it reads MTQLGFLLFIMIATRVCSA. Residues 32-251 enclose the Fibrinogen C-terminal domain; sequence SFFSSLPRSC…NNERAASALC (220 aa). C41 and C70 are joined by a disulfide. Residues H86, E87, N89, G92, G97, D98, and D133 each contribute to the Ca(2+) site. Cystine bridges form between C94–C280, C199–C259, and C251–C265. A glycan (N-linked (GlcNAc...) asparagine) is linked at N163. Residues N260, E262, E274, and D282 each contribute to the Ca(2+) site. A carbohydrate-binding positions include 262 to 263 and E274; that span reads EH. S298 carries the GPI-anchor amidated serine lipid modification. A propeptide spanning residues 299–313 is cleaved from the precursor; sequence NSREITEAAVLLFYR.

As to expression, expressed in the globlet and Paneth cells of the small intestine of infected mice. Expressed in the ileum of uninfected mice.

The protein localises to the cell membrane. It is found in the secreted. May play a protective role in the innate immune response to parasite infection. This Mus musculus (Mouse) protein is Intelectin-1b (Itln1b).